We begin with the raw amino-acid sequence, 220 residues long: tRNA (guanine-N(7)-)-methyltransferase (220 aa).

Positions 44, 69, 96, and 118 each coordinate S-adenosyl-L-methionine. Aspartate 118 is a catalytic residue. Lysine 122 serves as a coordination point for substrate. The segment at 124–129 (RHEKRR) is interaction with RNA. Substrate-binding positions include aspartate 154 and 191–194 (TEYE).

This sequence belongs to the class I-like SAM-binding methyltransferase superfamily. TrmB family.

It catalyses the reaction guanosine(46) in tRNA + S-adenosyl-L-methionine = N(7)-methylguanosine(46) in tRNA + S-adenosyl-L-homocysteine. Its pathway is tRNA modification; N(7)-methylguanine-tRNA biosynthesis. Catalyzes the formation of N(7)-methylguanine at position 46 (m7G46) in tRNA. This is tRNA (guanine-N(7)-)-methyltransferase from Halalkalibacterium halodurans (strain ATCC BAA-125 / DSM 18197 / FERM 7344 / JCM 9153 / C-125) (Bacillus halodurans).